We begin with the raw amino-acid sequence, 268 residues long: TATA-box-binding protein (268 aa).

A compositionally biased stretch (polar residues) spans 1 to 24 (MDSLTTHPATAQQARAFTSPSSLS). The segment at 1 to 86 (MDSLTTHPAT…TPAATPGASA (86 aa)) is disordered. Residues 50–86 (NGQSANGNVNGQQQGANAANGNGVMPATPAATPGASA) show a composition bias toward low complexity. Tandem repeats lie at residues 95 to 171 (LQNI…ARII) and 185 to 262 (IQNI…YPVL).

This sequence belongs to the TBP family. Belongs to the TFIID complex together with the TBP-associated factors (TAFs). Binds DNA as monomer.

It is found in the nucleus. Its function is as follows. General transcription factor that functions at the core of the DNA-binding multiprotein factor TFIID. Binding of TFIID to the TATA box is the initial transcriptional step of the pre-initiation complex (PIC), playing a role in the activation of eukaryotic genes transcribed by RNA polymerase II. This is TATA-box-binding protein (tbpA) from Emericella nidulans (strain FGSC A4 / ATCC 38163 / CBS 112.46 / NRRL 194 / M139) (Aspergillus nidulans).